Consider the following 774-residue polypeptide: 5-methyltetrahydropteroyltriglutamate--homocysteine methyltransferase (774 aa).

5-methyltetrahydropteroyltri-L-glutamate contacts are provided by residues 15 to 18 and Lys-116; that span reads RELK. L-homocysteine is bound by residues 445–447 and Glu-498; that span reads IGS. L-methionine contacts are provided by residues 445–447 and Glu-498; that span reads IGS. 5-methyltetrahydropteroyltri-L-glutamate-binding positions include 529-530 and Trp-575; that span reads RC. Residue Asp-613 coordinates L-homocysteine. Asp-613 lines the L-methionine pocket. Position 619 (Glu-619) interacts with 5-methyltetrahydropteroyltri-L-glutamate. Zn(2+) contacts are provided by His-655, Cys-657, and Glu-679. Residue His-708 is the Proton donor of the active site. A Zn(2+)-binding site is contributed by Cys-740.

The protein belongs to the vitamin-B12 independent methionine synthase family. Requires Zn(2+) as cofactor.

The catalysed reaction is 5-methyltetrahydropteroyltri-L-glutamate + L-homocysteine = tetrahydropteroyltri-L-glutamate + L-methionine. It participates in amino-acid biosynthesis; L-methionine biosynthesis via de novo pathway; L-methionine from L-homocysteine (MetE route): step 1/1. Functionally, catalyzes the transfer of a methyl group from 5-methyltetrahydrofolate to homocysteine resulting in methionine formation. The sequence is that of 5-methyltetrahydropteroyltriglutamate--homocysteine methyltransferase from Flavobacterium johnsoniae (strain ATCC 17061 / DSM 2064 / JCM 8514 / BCRC 14874 / CCUG 350202 / NBRC 14942 / NCIMB 11054 / UW101) (Cytophaga johnsonae).